The sequence spans 34 residues: Cytochrome b6-f complex subunit 8 (34 aa).

Residues 3–23 traverse the membrane as a helical segment; sequence IFQIGWAALAAIFTFSIAMVV.

This sequence belongs to the PetN family. As to quaternary structure, the 4 large subunits of the cytochrome b6-f complex are cytochrome b6, subunit IV (17 kDa polypeptide, PetD), cytochrome f and the Rieske protein, while the 4 small subunits are PetG, PetL, PetM and PetN. The complex functions as a dimer.

It localises to the cellular thylakoid membrane. Component of the cytochrome b6-f complex, which mediates electron transfer between photosystem II (PSII) and photosystem I (PSI), cyclic electron flow around PSI, and state transitions. This Prochlorococcus marinus subsp. pastoris (strain CCMP1986 / NIES-2087 / MED4) protein is Cytochrome b6-f complex subunit 8.